Here is a 630-residue protein sequence, read N- to C-terminus: MSTNNALRVFWKSREWNMKTSTFDSDEDILLLPKRKRFRKKKSRPVRHTKRHEEEQVYEQGTTLPCSICKHEIDLTGIFLHKKQHVALATLGFQWMGRKKPQPSVIAVQRQFMISKLLSSFMFTEKTLQSINNAFELLWKKQIPAYYKIFDNIDRSVIYSQKICHLLIKGVGICEDRNSTWKADMNDKFTVVSNFGNKPNVCFFGLFDGHHGASAAELTSMELPVLLLHQLSKFDPSYQMTTDEQQIINSFYTVFREEYAAIEDLFSAINKTEAVRCEYEDTHKAFAKAFWRMDRLLGLGRKEVSRVQWSGCSAVTCILEGKPKSPYAHKNWKRKNTHDGLAESSPSQEMPKIISGILHVANTGNVQAVLCRNGKGFCLTKEHTTRNTNERRRILQNGAVISSNEPYGLVEGQVKTTRGLGFHGNLKLKKSIIPAPQTISVPIDDLCQFLIVATNGLWEVLDKEEVTALAMTTFHMYKETYCPIIPNKSPSKGPLLFSTSEPNLTKSQSNIHVLFQYKSVSEVRVSTTNSKENLSDSNYSKYCIYNPENVETFPAETTHRKPCSEKVTDRPTSVNDVATNEKESDTKSFYEGAAEYVSHELVNAALLAGSRDNITVMVIFLNGSEYQLLT.

Residues 170–621 enclose the PPM-type phosphatase domain; the sequence is GVGICEDRNS…DNITVMVIFL (452 aa). Over residues 557-569 the composition is skewed to basic and acidic residues; the sequence is TTHRKPCSEKVTD. The segment at 557–578 is disordered; sequence TTHRKPCSEKVTDRPTSVNDVA.

This sequence belongs to the PP2C family.

The polypeptide is Protein phosphatase 2C-like domain-containing protein 1 (PP2D1) (Homo sapiens (Human)).